The chain runs to 1009 residues: DNA polymerase catalytic subunit (1009 aa).

Belongs to the DNA polymerase type-B family.

It localises to the host nucleus. The catalysed reaction is DNA(n) + a 2'-deoxyribonucleoside 5'-triphosphate = DNA(n+1) + diphosphate. In Saimiri sciureus (Common squirrel monkey), this protein is DNA polymerase catalytic subunit (9).